Here is a 289-residue protein sequence, read N- to C-terminus: Rhodopsin (289 aa).

The Extracellular portion of the chain corresponds to 1 to 7 (YLVNPAG). A helical membrane pass occupies residues 8–32 (YAALGAYMFLLILIGFPVNFLTLYV). The Cytoplasmic segment spans residues 33 to 44 (TLEHKKLRTPLN). Residues 45–67 (YILLNLAVADLFMVLGGFTTTMY) traverse the membrane as a helical segment. The Extracellular portion of the chain corresponds to 68-81 (TSMHGYFVLGRLGC). Cysteine 81 and cysteine 158 form a disulfide bridge. The chain crosses the membrane as a helical span at residues 82-104 (NLEGFFATLGGEIALWSLVVLAI). A 'Ionic lock' involved in activated form stabilization motif is present at residues 105 to 107 (ERW). Over 105 to 123 (ERWIVGLKPIRNFRFTEDH) the chain is Cytoplasmic. The helical transmembrane segment at 124-144 (AIMGLAFSWVMALSCAVPPLA) threads the bilayer. Over 145–173 (GWLRYIPEGIQGSCGVDYYTRAEGFNNES) the chain is Extracellular. Asparagine 171 carries N-linked (GlcNAc...) asparagine glycosylation. The helical transmembrane segment at 174-195 (FVIYMFTVHFLIPLSVIFFCYG) threads the bilayer. Over 196–223 (RLLCAVKEAAAAQQESETTQRAEKEVSR) the chain is Cytoplasmic. The helical transmembrane segment at 224–245 (MVVIMVIGFLVCWLPYASVAWW) threads the bilayer. At 246–257 (IFCNQGSDFGPI) the chain is on the extracellular side. The chain crosses the membrane as a helical span at residues 258–279 (FMTLPSFFAKRPAIYNPMIYIC). Lysine 267 is subject to N6-(retinylidene)lysine. Residues 280–289 (MNKQFRHCMI) are Cytoplasmic-facing.

Belongs to the G-protein coupled receptor 1 family. Opsin subfamily. In terms of processing, phosphorylated on some or all of the serine and threonine residues present in the C-terminal region. Post-translationally, contains one covalently linked retinal chromophore.

It localises to the membrane. Its subcellular location is the cell projection. It is found in the cilium. The protein localises to the photoreceptor outer segment. Photoreceptor required for image-forming vision at low light intensity. While most salt water fish species use retinal as chromophore, most freshwater fish use 3-dehydroretinal, or a mixture of retinal and 3-dehydroretinal. Light-induced isomerization of 11-cis to all-trans retinal triggers a conformational change that activates signaling via G-proteins. Subsequent receptor phosphorylation mediates displacement of the bound G-protein alpha subunit by arrestin and terminates signaling. In Limnocottus pallidus (Ray-finned fish), this protein is Rhodopsin (rho).